The sequence spans 129 residues: Glycine cleavage system H protein (129 aa).

The Lipoyl-binding domain maps to leucine 24–arginine 106. Lysine 65 bears the N6-lipoyllysine mark.

It belongs to the GcvH family. The glycine cleavage system is composed of four proteins: P, T, L and H. It depends on (R)-lipoate as a cofactor.

In terms of biological role, the glycine cleavage system catalyzes the degradation of glycine. The H protein shuttles the methylamine group of glycine from the P protein to the T protein. The protein is Glycine cleavage system H protein of Synechococcus sp. (strain CC9311).